A 248-amino-acid chain; its full sequence is Adenylate kinase (248 aa).

G37–T42 contacts ATP. The segment at S57–V86 is NMP. AMP contacts are provided by residues R63, Q84–V86, G111–R114, and Q118. The interval G149–D181 is LID. R150 serves as a coordination point for ATP. AMP is bound by residues R178 and R189.

It belongs to the adenylate kinase family. In terms of assembly, monomer.

The protein localises to the cytoplasm. It catalyses the reaction AMP + ATP = 2 ADP. Its function is as follows. Catalyzes the reversible transfer of the terminal phosphate group between ATP and AMP. Plays an important role in cellular energy homeostasis and in adenine nucleotide metabolism. The polypeptide is Adenylate kinase (Giardia intestinalis (Giardia lamblia)).